Here is a 325-residue protein sequence, read N- to C-terminus: Peroxidase 45 (325 aa).

The N-terminal stretch at 1–25 (MEKNTSQTIFSNFFLLLLLSSCVSA) is a signal peptide. 4 disulfides stabilise this stretch: Cys-36–Cys-115, Cys-69–Cys-74, Cys-121–Cys-321, and Cys-200–Cys-232. The active-site Proton acceptor is His-67. Ca(2+) contacts are provided by Asp-68, Val-71, Gly-73, Asp-75, and Ser-77. Position 163 (Pro-163) interacts with substrate. His-193 lines the heme b pocket. A Ca(2+)-binding site is contributed by Thr-194. 3 residues coordinate Ca(2+): Asp-245, Ser-248, and Asp-253.

Belongs to the peroxidase family. Classical plant (class III) peroxidase subfamily. The cofactor is heme b. Ca(2+) serves as cofactor. In terms of tissue distribution, slightly expressed in roots.

It is found in the secreted. It catalyses the reaction 2 a phenolic donor + H2O2 = 2 a phenolic radical donor + 2 H2O. Removal of H(2)O(2), oxidation of toxic reductants, biosynthesis and degradation of lignin, suberization, auxin catabolism, response to environmental stresses such as wounding, pathogen attack and oxidative stress. These functions might be dependent on each isozyme/isoform in each plant tissue. In Arabidopsis thaliana (Mouse-ear cress), this protein is Peroxidase 45 (PER45).